The sequence spans 661 residues: Probable potassium transport system protein Kup 1 (661 aa).

Over residues 1–11 the composition is skewed to gly residues; that stretch reads MKGLFPAGGGN. The interval 1–38 is disordered; that stretch reads MKGLFPAGGGNPPSSYLSRFLPHRKERSPENVTSGRNG. Transmembrane regions (helical) follow at residues 48–68, 85–105, 139–159, 177–197, 207–227, 251–271, 286–306, 324–344, 384–404, 405–425, 436–456, and 458–478; these read LALG…LYTI, IMGV…IKYI, AVVV…GFIT, AAKN…FLVQ, IFGP…LLCI, VHGL…EALY, WFAM…AALL, LLLP…QAMI, LMMV…GLAG, AYGV…FFVA, TAPL…SNLL, and FFDG…VMAS.

It belongs to the HAK/KUP transporter (TC 2.A.72) family.

It is found in the cell inner membrane. It catalyses the reaction K(+)(in) + H(+)(in) = K(+)(out) + H(+)(out). Functionally, transport of potassium into the cell. Likely operates as a K(+):H(+) symporter. The protein is Probable potassium transport system protein Kup 1 of Syntrophobacter fumaroxidans (strain DSM 10017 / MPOB).